A 70-amino-acid chain; its full sequence is MIMLIINYIYVINNCIYYKFLLSYLYLYCTVSNWKKYLIFFIKLEDIKVIYLILYKLGYNIINELFFRGK.

The protein localises to the plastid. This is an uncharacterized protein from Euglena longa (Euglenophycean alga).